Reading from the N-terminus, the 260-residue chain is 14-3-3-like protein (260 aa).

This sequence belongs to the 14-3-3 family.

The chain is 14-3-3-like protein from Pisum sativum (Garden pea).